The following is a 1937-amino-acid chain: Myosin-8 (1937 aa).

The Myosin N-terminal SH3-like domain occupies 35–84; that stretch reads DAKTSVFVAEPKESYVKSTIQSKEGGKVTVKTEGGATLTVREDQVFPMNP. A phosphothreonine mark is found at Thr66 and Thr71. The Myosin motor domain occupies 88 to 781; it reads DKIEDMAMMT…LLGLLEEMRD (694 aa). N6,N6,N6-trimethyllysine is present on Lys132. 181–188 contacts ATP; the sequence is GESGAGKT. Tyr389 is subject to Phosphotyrosine. Ser392 is modified (phosphoserine). Thr419 is modified (phosphothreonine). At Tyr424 the chain carries Phosphotyrosine. The residue at position 625 (Ser625) is a Phosphoserine. An actin-binding region spans residues 658-680; that stretch reads LNKLMTNLRSTHPHFVRCIIPNE. His756 carries the pros-methylhistidine modification. Positions 760 to 774 are actin-binding; the sequence is KFGHTKVFFKAGLLG. Residues 781-813 form the IQ domain; sequence DEKLAQIITRTQAVCRGFLMRVEYQKMLQRREA. The stretch at 842 to 1937 forms a coiled coil; the sequence is LLKSAETEKE…REVHTKISAE (1096 aa). Ser1091 and Ser1095 each carry phosphoserine. The interval 1126–1146 is disordered; the sequence is EAERASRAKAEKQRSDLSREL. The segment covering 1127-1146 has biased composition (basic and acidic residues); that stretch reads AERASRAKAEKQRSDLSREL. Phosphoserine is present on residues Ser1161, Ser1236, Ser1242, and Ser1260. Phosphothreonine is present on residues Thr1264 and Thr1285. Phosphoserine is present on residues Ser1291, Ser1302, and Ser1305. Tyr1463 is modified (phosphotyrosine). The residue at position 1466 (Thr1466) is a Phosphothreonine. At Ser1473 the chain carries Phosphoserine. Tyr1491 carries the post-translational modification Phosphotyrosine. Residue Ser1494 is modified to Phosphoserine. Thr1500 is modified (phosphothreonine). Position 1513 is a phosphoserine (Ser1513). Thr1516 carries the phosphothreonine modification. Ser1553, Ser1573, Ser1602, Ser1713, and Ser1725 each carry phosphoserine. Position 1729 is a phosphothreonine (Thr1729). Ser1738 is subject to Phosphoserine.

Belongs to the TRAFAC class myosin-kinesin ATPase superfamily. Myosin family. In terms of assembly, muscle myosin is a hexameric protein that consists of 2 heavy chain subunits (MHC), 2 alkali light chain subunits (MLC) and 2 regulatory light chain subunits (MLC-2).

It is found in the cytoplasm. Its subcellular location is the myofibril. In terms of biological role, muscle contraction. This Homo sapiens (Human) protein is Myosin-8 (MYH8).